Consider the following 153-residue polypeptide: Protein DpnD (153 aa).

The chain is Protein DpnD from Streptococcus pneumoniae serotype 4 (strain ATCC BAA-334 / TIGR4).